Consider the following 70-residue polypeptide: Putative membrane protein insertion efficiency factor (70 aa).

This sequence belongs to the UPF0161 family.

It localises to the cell membrane. In terms of biological role, could be involved in insertion of integral membrane proteins into the membrane. This chain is Putative membrane protein insertion efficiency factor, found in Lachnoclostridium phytofermentans (strain ATCC 700394 / DSM 18823 / ISDg) (Clostridium phytofermentans).